We begin with the raw amino-acid sequence, 781 residues long: Zinc finger protein klf1 (781 aa).

2 C2H2-type zinc fingers span residues Y17–H41 and F47–H70.

It localises to the nucleus. The protein localises to the cytoplasm. Its subcellular location is the cytoskeleton. The protein resides in the spindle. Its function is as follows. Required for maintaining cell viability in nitrogen-deficient stationary phase (G0) cells. In Schizosaccharomyces pombe (strain 972 / ATCC 24843) (Fission yeast), this protein is Zinc finger protein klf1 (klf1).